Reading from the N-terminus, the 225-residue chain is 3-dehydroquinate dehydratase (225 aa).

3-dehydroquinate contacts are provided by residues 30–32 (EWR) and Arg-62. The active-site Proton donor/acceptor is His-118. The Schiff-base intermediate with substrate role is filled by Lys-143. Arg-186, Ser-205, and Gln-209 together coordinate 3-dehydroquinate.

This sequence belongs to the type-I 3-dehydroquinase family. Homodimer.

The catalysed reaction is 3-dehydroquinate = 3-dehydroshikimate + H2O. It participates in metabolic intermediate biosynthesis; chorismate biosynthesis; chorismate from D-erythrose 4-phosphate and phosphoenolpyruvate: step 3/7. Involved in the third step of the chorismate pathway, which leads to the biosynthesis of aromatic amino acids. Catalyzes the cis-dehydration of 3-dehydroquinate (DHQ) and introduces the first double bond of the aromatic ring to yield 3-dehydroshikimate. In Streptococcus mutans serotype c (strain ATCC 700610 / UA159), this protein is 3-dehydroquinate dehydratase.